The sequence spans 161 residues: 3-isopropylmalate dehydratase small subunit (161 aa).

Belongs to the LeuD family. LeuD type 2 subfamily. As to quaternary structure, heterodimer of LeuC and LeuD.

It catalyses the reaction (2R,3S)-3-isopropylmalate = (2S)-2-isopropylmalate. It participates in amino-acid biosynthesis; L-leucine biosynthesis; L-leucine from 3-methyl-2-oxobutanoate: step 2/4. Its function is as follows. Catalyzes the isomerization between 2-isopropylmalate and 3-isopropylmalate, via the formation of 2-isopropylmaleate. The sequence is that of 3-isopropylmalate dehydratase small subunit from Metallosphaera sedula (strain ATCC 51363 / DSM 5348 / JCM 9185 / NBRC 15509 / TH2).